A 274-amino-acid chain; its full sequence is Formamidopyrimidine-DNA glycosylase (274 aa).

Catalysis depends on Pro-2, which acts as the Schiff-base intermediate with DNA. Glu-3 serves as the catalytic Proton donor. Lys-59 serves as the catalytic Proton donor; for beta-elimination activity. DNA-binding residues include His-93, Arg-112, and Lys-153. The segment at 238-272 (QVHTKFNKPCPNCGELIQKIKLGGRGTYFCKKCQQ) adopts an FPG-type zinc-finger fold. Arg-262 serves as the catalytic Proton donor; for delta-elimination activity.

This sequence belongs to the FPG family. As to quaternary structure, monomer. It depends on Zn(2+) as a cofactor.

The enzyme catalyses Hydrolysis of DNA containing ring-opened 7-methylguanine residues, releasing 2,6-diamino-4-hydroxy-5-(N-methyl)formamidopyrimidine.. It catalyses the reaction 2'-deoxyribonucleotide-(2'-deoxyribose 5'-phosphate)-2'-deoxyribonucleotide-DNA = a 3'-end 2'-deoxyribonucleotide-(2,3-dehydro-2,3-deoxyribose 5'-phosphate)-DNA + a 5'-end 5'-phospho-2'-deoxyribonucleoside-DNA + H(+). Its function is as follows. Involved in base excision repair of DNA damaged by oxidation or by mutagenic agents. Acts as a DNA glycosylase that recognizes and removes damaged bases. Has a preference for oxidized purines, such as 7,8-dihydro-8-oxoguanine (8-oxoG). Has AP (apurinic/apyrimidinic) lyase activity and introduces nicks in the DNA strand. Cleaves the DNA backbone by beta-delta elimination to generate a single-strand break at the site of the removed base with both 3'- and 5'-phosphates. The polypeptide is Formamidopyrimidine-DNA glycosylase (Mycoplasma mobile (strain ATCC 43663 / 163K / NCTC 11711) (Mesomycoplasma mobile)).